We begin with the raw amino-acid sequence, 228 residues long: Cytochrome c oxidase subunit 2 (228 aa).

Residues 1-14 lie on the Mitochondrial intermembrane side of the membrane; that stretch reads MANHSQLGFQDASS. A helical membrane pass occupies residues 15–45; that stretch reads PIMEELVEFHDHALIVALAICSLVLYLLAHM. Topologically, residues 46 to 58 are mitochondrial matrix; the sequence is LMEKLSSNAVDAQ. The chain crosses the membrane as a helical span at residues 59–86; the sequence is EVELIWTILPAIVLVLLALPSLQILYMM. Over 87–228 the chain is Mitochondrial intermembrane; sequence DEIDEPDLTL…ETWSSLLSAS (142 aa). Cu cation contacts are provided by histidine 160, cysteine 195, glutamate 197, cysteine 199, histidine 203, and methionine 206. Residue glutamate 197 participates in Mg(2+) binding.

Belongs to the cytochrome c oxidase subunit 2 family. In terms of assembly, component of the cytochrome c oxidase (complex IV, CIV), a multisubunit enzyme composed of 14 subunits. The complex is composed of a catalytic core of 3 subunits MT-CO1, MT-CO2 and MT-CO3, encoded in the mitochondrial DNA, and 11 supernumerary subunits COX4I, COX5A, COX5B, COX6A, COX6B, COX6C, COX7A, COX7B, COX7C, COX8 and NDUFA4, which are encoded in the nuclear genome. The complex exists as a monomer or a dimer and forms supercomplexes (SCs) in the inner mitochondrial membrane with NADH-ubiquinone oxidoreductase (complex I, CI) and ubiquinol-cytochrome c oxidoreductase (cytochrome b-c1 complex, complex III, CIII), resulting in different assemblies (supercomplex SCI(1)III(2)IV(1) and megacomplex MCI(2)III(2)IV(2)). Found in a complex with TMEM177, COA6, COX18, COX20, SCO1 and SCO2. Interacts with TMEM177 in a COX20-dependent manner. Interacts with COX20. Interacts with COX16. Cu cation is required as a cofactor.

The protein resides in the mitochondrion inner membrane. It catalyses the reaction 4 Fe(II)-[cytochrome c] + O2 + 8 H(+)(in) = 4 Fe(III)-[cytochrome c] + 2 H2O + 4 H(+)(out). Functionally, component of the cytochrome c oxidase, the last enzyme in the mitochondrial electron transport chain which drives oxidative phosphorylation. The respiratory chain contains 3 multisubunit complexes succinate dehydrogenase (complex II, CII), ubiquinol-cytochrome c oxidoreductase (cytochrome b-c1 complex, complex III, CIII) and cytochrome c oxidase (complex IV, CIV), that cooperate to transfer electrons derived from NADH and succinate to molecular oxygen, creating an electrochemical gradient over the inner membrane that drives transmembrane transport and the ATP synthase. Cytochrome c oxidase is the component of the respiratory chain that catalyzes the reduction of oxygen to water. Electrons originating from reduced cytochrome c in the intermembrane space (IMS) are transferred via the dinuclear copper A center (CU(A)) of subunit 2 and heme A of subunit 1 to the active site in subunit 1, a binuclear center (BNC) formed by heme A3 and copper B (CU(B)). The BNC reduces molecular oxygen to 2 water molecules using 4 electrons from cytochrome c in the IMS and 4 protons from the mitochondrial matrix. The protein is Cytochrome c oxidase subunit 2 (MT-CO2) of Cairina moschata (Muscovy duck).